Reading from the N-terminus, the 132-residue chain is MTMTDPIADMLTRVRNANMVRHEKLELPASNIKKEIAEILKSEGFIKNVEYVEDDKQGVIRLFLKYGQNNERVITGLKRISKPGLRVYAKANEVPKVLNGLGIALVSTSEGVITDKEARKRNVGGEIIAYVW.

Belongs to the universal ribosomal protein uS8 family. As to quaternary structure, part of the 30S ribosomal subunit. Contacts proteins S5 and S12.

Functionally, one of the primary rRNA binding proteins, it binds directly to 16S rRNA central domain where it helps coordinate assembly of the platform of the 30S subunit. This is Small ribosomal subunit protein uS8 from Staphylococcus epidermidis (strain ATCC 35984 / DSM 28319 / BCRC 17069 / CCUG 31568 / BM 3577 / RP62A).